A 1584-amino-acid polypeptide reads, in one-letter code: Pentafunctional AROM polypeptide (1584 aa).

The interval 1-384 is 3-dehydroquinate synthase; the sequence is MSQDTDVVSV…YEKHATVVSD (384 aa). Residues 46–48, 83–86, 114–116, and Asp119 each bind NAD(+); these read DTN, ETSK, and GGV. A 7-phospho-2-dehydro-3-deoxy-D-arabino-heptonate-binding site is contributed by Arg130. 139 to 140 is a binding site for NAD(+); the sequence is TT. The 7-phospho-2-dehydro-3-deoxy-D-arabino-heptonate site is built by Asp146 and Lys152. Lys161 serves as a coordination point for NAD(+). A 7-phospho-2-dehydro-3-deoxy-D-arabino-heptonate-binding site is contributed by Asn162. Residues 179 to 182 and Asn190 each bind NAD(+); that span reads FLET. Glu194 contacts Zn(2+). 7-phospho-2-dehydro-3-deoxy-D-arabino-heptonate contacts are provided by residues 194–197 and Lys250; that span reads EVIK. Catalysis depends on Glu260, which acts as the Proton acceptor; for 3-dehydroquinate synthase activity. Residues 264–268 and His271 each bind 7-phospho-2-dehydro-3-deoxy-D-arabino-heptonate; that span reads RNLLN. Zn(2+) is bound at residue His271. The active-site Proton acceptor; for 3-dehydroquinate synthase activity is His275. Residues His287 and Lys356 each contribute to the 7-phospho-2-dehydro-3-deoxy-D-arabino-heptonate site. His287 serves as a coordination point for Zn(2+). The interval 397-843 is EPSP synthase; that stretch reads VSPFDNSVSD…WDVLRNSFKI (447 aa). The active-site For EPSP synthase activity is the Cys825. A shikimate kinase region spans residues 863-1058; it reads RASVILIGMR…IQKPHSFFLS (196 aa). 870 to 877 is an ATP binding site; the sequence is GMRGAGKT. A 3-dehydroquinase region spans residues 1059-1280; that stretch reads LTFPNINDAI…AAPGQLSVRQ (222 aa). His1182 acts as the Proton acceptor; for 3-dehydroquinate dehydratase activity in catalysis. Lys1211 functions as the Schiff-base intermediate with substrate; for 3-dehydroquinate dehydratase activity in the catalytic mechanism. The interval 1293–1584 is shikimate dehydrogenase; that stretch reads PKKFYLFGTP…YMVLCAKEHN (292 aa).

In the N-terminal section; belongs to the sugar phosphate cyclases superfamily. Dehydroquinate synthase family. This sequence in the 2nd section; belongs to the EPSP synthase family. It in the 3rd section; belongs to the shikimate kinase family. The protein in the 4th section; belongs to the type-I 3-dehydroquinase family. In the C-terminal section; belongs to the shikimate dehydrogenase family. In terms of assembly, homodimer. It depends on Zn(2+) as a cofactor.

It localises to the cytoplasm. The enzyme catalyses 7-phospho-2-dehydro-3-deoxy-D-arabino-heptonate = 3-dehydroquinate + phosphate. The catalysed reaction is 3-dehydroquinate = 3-dehydroshikimate + H2O. It carries out the reaction shikimate + NADP(+) = 3-dehydroshikimate + NADPH + H(+). It catalyses the reaction shikimate + ATP = 3-phosphoshikimate + ADP + H(+). The enzyme catalyses 3-phosphoshikimate + phosphoenolpyruvate = 5-O-(1-carboxyvinyl)-3-phosphoshikimate + phosphate. It participates in metabolic intermediate biosynthesis; chorismate biosynthesis; chorismate from D-erythrose 4-phosphate and phosphoenolpyruvate: step 2/7. The protein operates within metabolic intermediate biosynthesis; chorismate biosynthesis; chorismate from D-erythrose 4-phosphate and phosphoenolpyruvate: step 3/7. Its pathway is metabolic intermediate biosynthesis; chorismate biosynthesis; chorismate from D-erythrose 4-phosphate and phosphoenolpyruvate: step 4/7. It functions in the pathway metabolic intermediate biosynthesis; chorismate biosynthesis; chorismate from D-erythrose 4-phosphate and phosphoenolpyruvate: step 5/7. It participates in metabolic intermediate biosynthesis; chorismate biosynthesis; chorismate from D-erythrose 4-phosphate and phosphoenolpyruvate: step 6/7. In terms of biological role, the AROM polypeptide catalyzes 5 consecutive enzymatic reactions in prechorismate polyaromatic amino acid biosynthesis. This is Pentafunctional AROM polypeptide from Schizosaccharomyces japonicus (strain yFS275 / FY16936) (Fission yeast).